Reading from the N-terminus, the 122-residue chain is Large ribosomal subunit protein uL14 (122 aa).

This sequence belongs to the universal ribosomal protein uL14 family. In terms of assembly, part of the 50S ribosomal subunit. Forms a cluster with proteins L3 and L19. In the 70S ribosome, L14 and L19 interact and together make contacts with the 16S rRNA in bridges B5 and B8.

In terms of biological role, binds to 23S rRNA. Forms part of two intersubunit bridges in the 70S ribosome. The polypeptide is Large ribosomal subunit protein uL14 (Dehalococcoides mccartyi (strain ATCC BAA-2266 / KCTC 15142 / 195) (Dehalococcoides ethenogenes (strain 195))).